Here is a 592-residue protein sequence, read N- to C-terminus: Elongation factor 1 alpha-like protein (592 aa).

2 disordered regions span residues 1–35 (MSRH…EEFR) and 78–159 (SSKA…KQNP). A compositionally biased stretch (acidic residues) spans 12–32 (LDDYELDEEPGEEELTEEQEE). Residues 82–111 (GAKEKQNTDSQKEKKQNKSKEALADAKDPL) show a composition bias toward basic and acidic residues. A compositionally biased stretch (polar residues) spans 113–124 (ESSNGIKNLSLN). Residues 137 to 151 (VKMKNSSESDNQPEK) show a composition bias toward basic and acidic residues. Residues 175–401 (KPVVHLVVTG…DQLVPPEKPY (227 aa)) enclose the tr-type G domain. Residues 184 to 191 (GHVDSGKS) are G1. Residue 184-191 (GHVDSGKS) participates in GTP binding. The tract at residues 240–244 (GVTMD) is G2. The segment at 261-264 (DAPG) is G3. GTP-binding positions include 323-326 (NKLD) and 352-355 (FKTS). Positions 323–326 (NKLD) are G4. A G5 region spans residues 363-365 (SAI).

Belongs to the TRAFAC class translation factor GTPase superfamily. Classic translation factor GTPase family. Component of the Dom34-Hbs1 complex, also named Pelota-HBS1L complex, composed of dom34 and hbs1.

It is found in the cytoplasm. It carries out the reaction GTP + H2O = GDP + phosphate + H(+). GTPase component of the Dom34-Hbs1 complex, a complex that recognizes stalled ribosomes and triggers the No-Go Decay (NGD) pathway. The Dom34-Hbs1 complex recognizes ribosomes stalled at the 3' end of an mRNA and engages stalled ribosomes by destabilizing mRNA in the mRNA channel. Following ribosome-binding, the Pelota-HBS1L complex promotes the disassembly of stalled ribosomes, followed by degradation of damaged mRNAs as part of the NGD pathway. This is Elongation factor 1 alpha-like protein from Schizosaccharomyces pombe (strain 972 / ATCC 24843) (Fission yeast).